We begin with the raw amino-acid sequence, 180 residues long: WPP domain-containing protein 2 (180 aa).

Over residues 1 to 26 (MAETAETINTTISSPPPESESSTTIS) the composition is skewed to low complexity. Disordered regions lie at residues 1-61 (MAET…LRIW) and 140-180 (SVKA…KSEA). The segment covering 27 to 36 (AMTDPTSQEA) has biased composition (polar residues). Residues 37–53 (ASKDTDLTKEAESEKKP) show a composition bias toward basic and acidic residues. The tract at residues 44–147 (TKEAESEKKP…LESVKARSNA (104 aa)) is WPP. Serine 173 carries the phosphoserine modification.

In terms of assembly, binds to FPP proteins. Interacts with WAP, WIP1, WIP2 and WIP3 through its WPP domain. Interacts with WIT1 and HSP70-1. Expressed in roots, stems, leaves and flowers.

Its subcellular location is the nucleus envelope. It is found in the cytoplasm. It localises to the nucleus. The protein localises to the golgi apparatus. Functionally, regulates the mitotic activity in roots. Plays a role with HSP70-1 in facilitating WIT1 nuclear envelope targeting. This chain is WPP domain-containing protein 2 (WPP2), found in Arabidopsis thaliana (Mouse-ear cress).